We begin with the raw amino-acid sequence, 168 residues long: Large ribosomal subunit protein uL29c (168 aa).

Residues 1–20 (MLAIHSLSSTPCSSGLTSPP) form a disordered region. The transit peptide at 1–58 (MLAIHSLSSTPCSSGLTSPPKSTLLTKSSFHGLRLPSVNLSSSLRLRVQTPPSSVVVM) directs the protein to the chloroplast.

As to quaternary structure, component of the chloroplast large ribosomal subunit (LSU). Mature 70S chloroplast ribosomes of higher plants consist of a small (30S) and a large (50S) subunit. The 30S small subunit contains 1 molecule of ribosomal RNA (16S rRNA) and 24 different proteins. The 50S large subunit contains 3 rRNA molecules (23S, 5S and 4.5S rRNA) and 33 different proteins.

It is found in the plastid. The protein localises to the chloroplast. In terms of biological role, component of the chloroplast ribosome (chloro-ribosome), a dedicated translation machinery responsible for the synthesis of chloroplast genome-encoded proteins, including proteins of the transcription and translation machinery and components of the photosynthetic apparatus. This is Large ribosomal subunit protein uL29c (RPL29) from Spinacia oleracea (Spinach).